Reading from the N-terminus, the 420-residue chain is RING finger protein 39 (420 aa).

Residues 88–135 (CPLCGGSFEDPVLLACEHSFCRACLARRWGTPPATGTEASPTACPCCG) form an RING-type zinc finger. Residues 210-420 (DDLPEDYPVV…APLRIVPAES (211 aa)) enclose the B30.2/SPRY domain.

Expressed in testis.

It localises to the cytoplasm. It catalyses the reaction S-ubiquitinyl-[E2 ubiquitin-conjugating enzyme]-L-cysteine + [acceptor protein]-L-lysine = [E2 ubiquitin-conjugating enzyme]-L-cysteine + N(6)-ubiquitinyl-[acceptor protein]-L-lysine.. It functions in the pathway protein modification; protein ubiquitination. Functionally, plays an inhibitory role in anti-RNA viral innate immunity by targeting the adapter DDX3X and promoting its 'Lys-48'-linked polyubiquitination. Alternatively, enhances the cGAS-STING pathway activation by promoting 'Lys-63'-linked ubiquitination of STING1, facilitating the STING1-TBK1 complex formation and STING1 activation. In terms of biological role, (Microbial infection) Plays a positive role in human immunodeficiency virus (HIV-1) replication. The protein is RING finger protein 39 (RNF39) of Homo sapiens (Human).